Here is a 205-residue protein sequence, read N- to C-terminus: GTP cyclohydrolase-2 (205 aa).

R49–E53 contributes to the GTP binding site. Zn(2+)-binding residues include C54, C65, and C67. Residues Q70, E92–R94, and T114 each bind GTP. D126 functions as the Proton acceptor in the catalytic mechanism. Residue R128 is the Nucleophile of the active site. Residues T149 and K154 each coordinate GTP.

This sequence belongs to the GTP cyclohydrolase II family. The cofactor is Zn(2+).

The enzyme catalyses GTP + 4 H2O = 2,5-diamino-6-hydroxy-4-(5-phosphoribosylamino)-pyrimidine + formate + 2 phosphate + 3 H(+). Its pathway is cofactor biosynthesis; riboflavin biosynthesis; 5-amino-6-(D-ribitylamino)uracil from GTP: step 1/4. Catalyzes the conversion of GTP to 2,5-diamino-6-ribosylamino-4(3H)-pyrimidinone 5'-phosphate (DARP), formate and pyrophosphate. The protein is GTP cyclohydrolase-2 of Shewanella loihica (strain ATCC BAA-1088 / PV-4).